Consider the following 369-residue polypeptide: Beta-1,4-galactosyltransferase 2 (369 aa).

Residues 1–15 (MSRLLGGTLERVCKA) lie on the Cytoplasmic side of the membrane. The helical; Signal-anchor for type II membrane protein transmembrane segment at 16–36 (VLLLCLLHFLVAVILYFDVYA) threads the bilayer. Topologically, residues 37–369 (QHLAFFSRFS…GRPMSWLNQG (333 aa)) are lumenal. Over residues 59-75 (SSSTNCSRPNATASSSG) the composition is skewed to polar residues. The disordered stretch occupies residues 59 to 90 (SSSTNCSRPNATASSSGLPEVPSARPGPTAPV). N-linked (GlcNAc...) asparagine glycans are attached at residues asparagine 63 and asparagine 68. Residues cysteine 94 and cysteine 136 are joined by a disulfide bond. UDP-alpha-D-galactose-binding positions include 147 to 151 (PFRHR), 186 to 188 (FNR), 214 to 215 (VD), and tryptophan 275. Cysteines 208 and 227 form a disulfide. Aspartate 215 contributes to the Mn(2+) binding site. Position 277–280 (277–280 (GEDD)) interacts with N-acetyl-D-glucosamine. Histidine 308 serves as a coordination point for Mn(2+). 308–310 (HDR) serves as a coordination point for UDP-alpha-D-galactose. Arginine 320 is an N-acetyl-D-glucosamine binding site. A glycan (N-linked (GlcNAc...) asparagine) is linked at asparagine 354.

Belongs to the glycosyltransferase 7 family. The cofactor is Mn(2+).

Its subcellular location is the golgi apparatus. It is found in the golgi stack membrane. It carries out the reaction D-glucose + UDP-alpha-D-galactose = lactose + UDP + H(+). The catalysed reaction is an N-acetyl-beta-D-glucosaminyl derivative + UDP-alpha-D-galactose = a beta-D-galactosyl-(1-&gt;4)-N-acetyl-beta-D-glucosaminyl derivative + UDP + H(+). It catalyses the reaction N-acetyl-D-glucosamine + UDP-alpha-D-galactose = beta-D-galactosyl-(1-&gt;4)-N-acetyl-D-glucosamine + UDP + H(+). Its pathway is protein modification; protein glycosylation. In terms of biological role, responsible for the synthesis of complex-type N-linked oligosaccharides in many glycoproteins as well as the carbohydrate moieties of glycolipids. Can produce lactose. This chain is Beta-1,4-galactosyltransferase 2 (B4GALT2), found in Cricetulus griseus (Chinese hamster).